A 403-amino-acid polypeptide reads, in one-letter code: Betaine--homocysteine S-methyltransferase 1 (403 aa).

The region spanning 8 to 311 (KGLLERLDAG…YHTRAIAEEL (304 aa)) is the Hcy-binding domain. 3 residues coordinate Zn(2+): Cys214, Cys296, and Cys297.

As to quaternary structure, homotetramer. Zn(2+) is required as a cofactor.

Its subcellular location is the cytoplasm. It carries out the reaction L-homocysteine + glycine betaine = N,N-dimethylglycine + L-methionine. Its pathway is amine and polyamine degradation; betaine degradation; sarcosine from betaine: step 1/2. It participates in amino-acid biosynthesis; L-methionine biosynthesis via de novo pathway; L-methionine from L-homocysteine (BhmT route): step 1/1. Involved in the regulation of homocysteine metabolism. Converts betaine and homocysteine to dimethylglycine and methionine, respectively. This reaction is also required for the irreversible oxidation of choline. The protein is Betaine--homocysteine S-methyltransferase 1 (bhmt) of Xenopus laevis (African clawed frog).